Reading from the N-terminus, the 223-residue chain is Sigma non-opioid intracellular receptor 1 (223 aa).

At 1-9 (MQWAAGRRW) the chain is on the lumenal side. Residues 2 to 8 (QWAAGRR) form a targeting to endoplasmic reticulum-associated lipid droplets region. A helical transmembrane segment spans residues 10–30 (AWITLFLTIVAVLIQAVWLWL). Residues 31–223 (GTQSFVFQRE…LTTYLFGQDS (193 aa)) lie on the Cytoplasmic side of the membrane. The tract at residues 99 to 106 (SLSEYVLL) is important for ligand-binding. A C-terminal hydrophobic region region spans residues 177 to 223 (VIPSTLAFALSDTIFSTQDFLTLFYTLRAYARGLRLELTTYLFGQDS).

It belongs to the ERG2 family. As to quaternary structure, homotrimer. Forms a ternary complex with ANK2 and ITPR3. The complex is disrupted by agonists. Interacts with KCNA4. Interacts with KCNA2; cocaine consumption leads to increased interaction. Interacts with RNF112 in an oxidative stress-regulated manner.

The protein localises to the nucleus inner membrane. It is found in the nucleus outer membrane. The protein resides in the nucleus envelope. Its subcellular location is the cytoplasmic vesicle. It localises to the endoplasmic reticulum membrane. The protein localises to the membrane. It is found in the lipid droplet. The protein resides in the cell junction. Its subcellular location is the cell membrane. It localises to the cell projection. The protein localises to the growth cone. It is found in the postsynaptic density membrane. Functions in lipid transport from the endoplasmic reticulum and is involved in a wide array of cellular functions probably through regulation of the biogenesis of lipid microdomains at the plasma membrane. Involved in the regulation of different receptors it plays a role in BDNF signaling and EGF signaling. Also regulates ion channels like the potassium channel and could modulate neurotransmitter release. Plays a role in calcium signaling through modulation together with ANK2 of the ITP3R-dependent calcium efflux at the endoplasmic reticulum. Plays a role in several other cell functions including proliferation, survival and death. Originally identified for its ability to bind various psychoactive drugs it is involved in learning processes, memory and mood alteration. Necessary for proper mitochondrial axonal transport in motor neurons, in particular the retrograde movement of mitochondria. Plays a role in protecting cells against oxidative stress-induced cell death via its interaction with RNF112. This is Sigma non-opioid intracellular receptor 1 (SIGMAR1) from Trichosurus vulpecula (Brush-tailed possum).